Reading from the N-terminus, the 480-residue chain is Coronin-2B (480 aa).

WD repeat units follow at residues 85-125, 135-177, 179-217, 220-263, and 265-308; these read GHQG…LKRN, GHSR…KMID, HRDV…VLQE, CKTH…MPVT, and EEID…PYLT. A coiled-coil region spans residues 436-475; that stretch reads NELLRMFFRQQEEIRRLKEQLSQRDLLVRQLELELKNLRN.

This sequence belongs to the WD repeat coronin family.

Its subcellular location is the cytoplasm. It is found in the cytoskeleton. In terms of biological role, may play a role in the reorganization of neuronal actin structure. This Xenopus tropicalis (Western clawed frog) protein is Coronin-2B (coro2b).